We begin with the raw amino-acid sequence, 188 residues long: Elongation factor P (188 aa).

Residue K34 is modified to N6-(3,6-diaminohexanoyl)-5-hydroxylysine.

It belongs to the elongation factor P family. May be beta-lysylated on the epsilon-amino group of Lys-34 by the combined action of EpmA and EpmB, and then hydroxylated on the C5 position of the same residue by EpmC (if this protein is present). Lysylation is critical for the stimulatory effect of EF-P on peptide-bond formation. The lysylation moiety may extend toward the peptidyltransferase center and stabilize the terminal 3-CCA end of the tRNA. Hydroxylation of the C5 position on Lys-34 may allow additional potential stabilizing hydrogen-bond interactions with the P-tRNA.

It is found in the cytoplasm. Its pathway is protein biosynthesis; polypeptide chain elongation. Involved in peptide bond synthesis. Alleviates ribosome stalling that occurs when 3 or more consecutive Pro residues or the sequence PPG is present in a protein, possibly by augmenting the peptidyl transferase activity of the ribosome. Modification of Lys-34 is required for alleviation. The chain is Elongation factor P from Klebsiella pneumoniae (strain 342).